We begin with the raw amino-acid sequence, 95 residues long: Aspartyl/glutamyl-tRNA(Asn/Gln) amidotransferase subunit C (95 aa).

The protein belongs to the GatC family. Heterotrimer of A, B and C subunits.

The catalysed reaction is L-glutamyl-tRNA(Gln) + L-glutamine + ATP + H2O = L-glutaminyl-tRNA(Gln) + L-glutamate + ADP + phosphate + H(+). It catalyses the reaction L-aspartyl-tRNA(Asn) + L-glutamine + ATP + H2O = L-asparaginyl-tRNA(Asn) + L-glutamate + ADP + phosphate + 2 H(+). Allows the formation of correctly charged Asn-tRNA(Asn) or Gln-tRNA(Gln) through the transamidation of misacylated Asp-tRNA(Asn) or Glu-tRNA(Gln) in organisms which lack either or both of asparaginyl-tRNA or glutaminyl-tRNA synthetases. The reaction takes place in the presence of glutamine and ATP through an activated phospho-Asp-tRNA(Asn) or phospho-Glu-tRNA(Gln). This is Aspartyl/glutamyl-tRNA(Asn/Gln) amidotransferase subunit C from Cytophaga hutchinsonii (strain ATCC 33406 / DSM 1761 / CIP 103989 / NBRC 15051 / NCIMB 9469 / D465).